Reading from the N-terminus, the 428-residue chain is Glutamyl-tRNA reductase (428 aa).

Substrate contacts are provided by residues 49-52, Ser109, 114-116, and Gln120; these read TCNR and EGQ. Cys50 (nucleophile) is an active-site residue. 189-194 provides a ligand contact to NADP(+); sequence GAGKMS.

This sequence belongs to the glutamyl-tRNA reductase family. As to quaternary structure, homodimer.

The enzyme catalyses (S)-4-amino-5-oxopentanoate + tRNA(Glu) + NADP(+) = L-glutamyl-tRNA(Glu) + NADPH + H(+). It functions in the pathway porphyrin-containing compound metabolism; protoporphyrin-IX biosynthesis; 5-aminolevulinate from L-glutamyl-tRNA(Glu): step 1/2. The protein operates within porphyrin-containing compound metabolism; chlorophyll biosynthesis. Catalyzes the NADPH-dependent reduction of glutamyl-tRNA(Glu) to glutamate 1-semialdehyde (GSA). This chain is Glutamyl-tRNA reductase, found in Gloeothece citriformis (strain PCC 7424) (Cyanothece sp. (strain PCC 7424)).